Here is a 62-residue protein sequence, read N- to C-terminus: Large ribosomal subunit protein eL24 (62 aa).

The Zn(2+) site is built by cysteine 7, cysteine 10, cysteine 33, and cysteine 37. Residues cysteine 7–cysteine 37 form a C4-type zinc finger.

This sequence belongs to the eukaryotic ribosomal protein eL24 family. In terms of assembly, part of the 50S ribosomal subunit. Forms a cluster with proteins L3 and L14. Zn(2+) is required as a cofactor.

In terms of biological role, binds to the 23S rRNA. In Sulfolobus acidocaldarius (strain ATCC 33909 / DSM 639 / JCM 8929 / NBRC 15157 / NCIMB 11770), this protein is Large ribosomal subunit protein eL24.